A 406-amino-acid polypeptide reads, in one-letter code: E3 ubiquitin-protein ligase RING1 (406 aa).

Threonine 24 carries the post-translational modification Phosphothreonine. The segment at methionine 30–aspartate 234 is necessary for transcriptional repression. Serine 38 bears the Phosphoserine mark. An RING-type zinc finger spans residues cysteine 48–arginine 88. Phosphoserine is present on residues serine 140, serine 187, and serine 190. 2 disordered regions span residues histidine 151–glutamate 263 and glutamine 309–glutamate 354. Residues glutamate 175–serine 187 show a composition bias toward acidic residues. The Nuclear localization signal motif lies at lysine 201–arginine 204. Residues glycine 205–glycine 228 are compositionally biased toward gly residues. Threonine 215 is modified (phosphothreonine). A phosphoserine mark is found at serine 229 and serine 232. The segment at glutamate 230–lysine 406 is necessary for interaction with CBX2. Gly residues predominate over residues arginine 235–leucine 244. Residues proline 246–proline 258 are compositionally biased toward pro residues. Residues serine 248 and serine 254 each carry the phosphoserine modification. Residues glycine 317–glutamate 343 show a composition bias toward gly residues.

As to quaternary structure, component of chromatin-associated Polycomb (PcG) complexes. Part of the E2F6.com-1 complex in G0 phase composed of E2F6, MGA, MAX, TFDP1, CBX3, BAT8, EUHMTASE1, RING1, RNF2/RING2 MBLR, L3MBTL2 and YAF2. Interacts with CBX2 and PCGF6. Component of a PRC1-like complex. Component of repressive BCOR complex containing Polycomb group subcomplex at least composed of RYBP, PCGF1, BCOR and RNF2/RING2. Interacts with BMI1, PHC2, PCGF2, RNF2; CBX6, CBX7 and CBX8. Interacts with MN1. Interacts with USP26.

The protein resides in the nucleus speckle. The catalysed reaction is S-ubiquitinyl-[E2 ubiquitin-conjugating enzyme]-L-cysteine + [acceptor protein]-L-lysine = [E2 ubiquitin-conjugating enzyme]-L-cysteine + N(6)-ubiquitinyl-[acceptor protein]-L-lysine.. It functions in the pathway protein modification; protein ubiquitination. Its function is as follows. Constitutes one of the E3 ubiquitin-protein ligases that mediate monoubiquitination of 'Lys-119' of histone H2A, thereby playing a central role in histone code and gene regulation. H2A 'Lys-119' ubiquitination gives a specific tag for epigenetic transcriptional repression and participates in X chromosome inactivation of female mammals. Essential component of a Polycomb group (PcG) multiprotein PRC1-like complex, a complex class required to maintain the transcriptionally repressive state of many genes, including Hox genes, throughout development. PcG PRC1 complex acts via chromatin remodeling and modification of histones, rendering chromatin heritably changed in its expressibility. Compared to RNF2/RING2, it does not have the main E3 ubiquitin ligase activity on histone H2A, and it may rather act as a modulator of RNF2/RING2 activity. The protein is E3 ubiquitin-protein ligase RING1 of Rattus norvegicus (Rat).